Consider the following 306-residue polypeptide: MLKKLSPIFSNITGVVRYQDLAYVASVSDEIQEQNIAHSYVTEWDCGTWCVAGEDDDMLPWEIVSATVVHEPVEQALFLGARGQVFCMGSGDIHEEQLPDGDDAIGGRGNMRGVACIDGVAYACGMDRQVYRRFDENDWRAIDTGARPPAGSEAVVGFEAIGGFGAREIYAVGWDGEIWQYDGKRWQPRESPTNLILTAICCAEDGSVYACGQAGTLLRGRNDHWEIIAQDDVDEDLWSLAWFDGALYVSSATAVYTLVGGHLKEVDFGDEQPQRCFHLSAADGVLWSIAAKDIFSFDGQQWTRID.

Interacts with Tse7.

Its function is as follows. Immunity protein that plays a role in preventing early activation of toxin Tse7. Protects thereby cells from Tse7 DNase activity. The polypeptide is Immune protein Tsi7 (Pseudomonas aeruginosa (strain ATCC 15692 / DSM 22644 / CIP 104116 / JCM 14847 / LMG 12228 / 1C / PRS 101 / PAO1)).